A 157-amino-acid chain; its full sequence is Peptide methionine sulfoxide reductase MsrA (157 aa).

Residue C13 is part of the active site.

This sequence belongs to the MsrA Met sulfoxide reductase family.

The enzyme catalyses L-methionyl-[protein] + [thioredoxin]-disulfide + H2O = L-methionyl-(S)-S-oxide-[protein] + [thioredoxin]-dithiol. It catalyses the reaction [thioredoxin]-disulfide + L-methionine + H2O = L-methionine (S)-S-oxide + [thioredoxin]-dithiol. Its function is as follows. Has an important function as a repair enzyme for proteins that have been inactivated by oxidation. Catalyzes the reversible oxidation-reduction of methionine sulfoxide in proteins to methionine. This chain is Peptide methionine sulfoxide reductase MsrA, found in Methanococcus maripaludis (strain C6 / ATCC BAA-1332).